The primary structure comprises 335 residues: Biotin synthase (335 aa).

The region spanning 47–276 is the Radical SAM core domain; the sequence is FYGKKVKLNM…SKEIRISGGR (230 aa). [4Fe-4S] cluster-binding residues include Cys-65, Cys-69, and Cys-72. [2Fe-2S] cluster is bound by residues Cys-109, Cys-141, Cys-201, and Arg-271.

The protein belongs to the radical SAM superfamily. Biotin synthase family. As to quaternary structure, homodimer. [4Fe-4S] cluster is required as a cofactor. [2Fe-2S] cluster serves as cofactor.

The catalysed reaction is (4R,5S)-dethiobiotin + (sulfur carrier)-SH + 2 reduced [2Fe-2S]-[ferredoxin] + 2 S-adenosyl-L-methionine = (sulfur carrier)-H + biotin + 2 5'-deoxyadenosine + 2 L-methionine + 2 oxidized [2Fe-2S]-[ferredoxin]. Its pathway is cofactor biosynthesis; biotin biosynthesis; biotin from 7,8-diaminononanoate: step 2/2. Its function is as follows. Catalyzes the conversion of dethiobiotin (DTB) to biotin by the insertion of a sulfur atom into dethiobiotin via a radical-based mechanism. The polypeptide is Biotin synthase (Bacillus subtilis subsp. natto).